The following is a 171-amino-acid chain: Nicotinamide-nucleotide adenylyltransferase (171 aa).

Belongs to the archaeal NMN adenylyltransferase family.

Its subcellular location is the cytoplasm. The enzyme catalyses beta-nicotinamide D-ribonucleotide + ATP + H(+) = diphosphate + NAD(+). Its pathway is cofactor biosynthesis; NAD(+) biosynthesis; NAD(+) from nicotinamide D-ribonucleotide: step 1/1. In Ignicoccus hospitalis (strain KIN4/I / DSM 18386 / JCM 14125), this protein is Nicotinamide-nucleotide adenylyltransferase.